Consider the following 155-residue polypeptide: 6,7-dimethyl-8-ribityllumazine synthase (155 aa).

5-amino-6-(D-ribitylamino)uracil is bound by residues phenylalanine 22, 56–58 (AFE), and 80–82 (AVI). 85 to 86 (NT) contacts (2S)-2-hydroxy-3-oxobutyl phosphate. Histidine 88 functions as the Proton donor in the catalytic mechanism. Phenylalanine 113 is a 5-amino-6-(D-ribitylamino)uracil binding site. Arginine 127 is a binding site for (2S)-2-hydroxy-3-oxobutyl phosphate.

This sequence belongs to the DMRL synthase family.

The enzyme catalyses (2S)-2-hydroxy-3-oxobutyl phosphate + 5-amino-6-(D-ribitylamino)uracil = 6,7-dimethyl-8-(1-D-ribityl)lumazine + phosphate + 2 H2O + H(+). It participates in cofactor biosynthesis; riboflavin biosynthesis; riboflavin from 2-hydroxy-3-oxobutyl phosphate and 5-amino-6-(D-ribitylamino)uracil: step 1/2. Its function is as follows. Catalyzes the formation of 6,7-dimethyl-8-ribityllumazine by condensation of 5-amino-6-(D-ribitylamino)uracil with 3,4-dihydroxy-2-butanone 4-phosphate. This is the penultimate step in the biosynthesis of riboflavin. In Streptococcus pneumoniae serotype 2 (strain D39 / NCTC 7466), this protein is 6,7-dimethyl-8-ribityllumazine synthase.